Reading from the N-terminus, the 1099-residue chain is Probable inorganic carbon transporter subunit DabA (1099 aa).

A disordered region spans residues 175–194 (RQGRRRFATTERRTRRTRRS). Residues 176-194 (QGRRRFATTERRTRRTRRS) are compositionally biased toward basic residues. Zn(2+)-binding residues include cysteine 514, aspartate 516, histidine 722, and cysteine 737. The tract at residues 1071–1099 (AGAGAAQPTRDAIELPEQASGPLPARDGQ) is disordered.

This sequence belongs to the inorganic carbon transporter (TC 9.A.2) DabA family. In terms of assembly, forms a complex with DabB. Requires Zn(2+) as cofactor.

It localises to the cell membrane. Its function is as follows. Part of an energy-coupled inorganic carbon pump. The sequence is that of Probable inorganic carbon transporter subunit DabA from Parafrankia sp. (strain EAN1pec).